The following is a 212-amino-acid chain: MTETEQTTAPIYPLKRNWTWWYLNDERNKSWEDRLKKVYTFNTVSEFWALYDAIRPPSGLNALCDYNVFRDDIQPMWEVPENSNGGRWLIVIDKGKTPEMVDAIWLEILMALVGEQFGKDMESICGLVCNVRGKGSKISVWTKDCNDDETNMRIGVVLKEKLMAASKDHSKPLFDVIRYEDHESCQKKTSSVVKAKLSLHSSDAPVAEKSAV.

Cys-125 and Cys-129 are joined by a disulfide.

The protein belongs to the eukaryotic initiation factor 4E family. In terms of assembly, EIF4F is a multi-subunit complex, the composition of which varies with external and internal environmental conditions. It is composed of at least EIF4A, EIF4E and EIF4G. EIF4E is also known to interact with other partners, including pgl-1. Interacts with ifet-1. As to expression, enriched in the germline from L3 larvae to adults; regions of the gonad undergoing spermatogenesis. Expressed in germ granules (P granules); when associated with pgl-1.

Its subcellular location is the cytoplasm. Functionally, recognizes and binds the 7-methylguanosine-containing mRNA cap during an early step in the initiation of protein synthesis and facilitates ribosome binding by inducing the unwinding of the mRNAs secondary structures. All 5 eIF4E proteins bind monomethyl cap structures. Only ife-1, ife-2 and ife-5 bind trimethyl cap structures which result from trans-splicing. Translation of trimethyl cap structure mRNAs may be regulated by intracellular redox state; disulfide bonds change the width and depth of the cap-binding cavity determining selectivity to mRNA caps. Required for progression through meiotic divisions during spermatogenesis and for the production of viable sperm. It is not required during oogenesis. The protein is Eukaryotic translation initiation factor 4E-1 (ife-1) of Caenorhabditis elegans.